Consider the following 467-residue polypeptide: Mitochondrial adenyl nucleotide antiporter SLC25A23 (467 aa).

The tract at residues 1 to 148 is regulatory N-terminal domain; it reads MRGGSSDAER…DHFLLHSLEN (148 aa). Topologically, residues 1–187 are mitochondrial intermembrane; that stretch reads MRGGSSDAER…EKLTGMWWKQ (187 aa). 3 EF-hand domains span residues 9 to 44, 76 to 111, and 112 to 147; these read ERRQRWGRLFEELDSNKDGRVDVHELRQGLARLGRG, EREQRLLLMFHSLDRNQDGHIDVSEIQQSFRALGIS, and ISLEQAEKILHSMDRDGTMTIDWQEWRDHFLLHSLE. Residues D22, N24, D26, R28, and E33 each contribute to the Ca(2+) site. The segment at 39 to 61 is disordered; that stretch reads ARLGRGDPDRAQQGVSSDWDADP. Ca(2+) is bound by residues D89, N91, D93, H95, and E100. The interval 149–158 is linker region; that stretch reads VEDVLYFWKH. The tract at residues 164-467 is C-terminal transmembrane transporter domain; that stretch reads IGECLTVPDE…MKQALGVTSR (304 aa). Solcar repeat units lie at residues 182–268, 276–361, and 373–461; these read GMWW…IKRA, LHVQ…LKNR, and PGIL…MKQA. Residues 188–205 traverse the membrane as a helical segment; sequence LVAGAVAGAVSRTGTAPL. The Mitochondrial matrix segment spans residues 206 to 242; it reads DRLKVFMQVHASKSNRLNILGGLRNMIQEGGVLSLWR. The chain crosses the membrane as a helical span at residues 243–262; it reads GNGINVLKIAPESAIKFMAY. The Mitochondrial intermembrane portion of the chain corresponds to 263–285; that stretch reads EQIKRAIRGQQETLHVQERFVAG. The chain crosses the membrane as a helical span at residues 286–299; it reads SLAGATAQTIIYPM. At 300–335 the chain is on the mitochondrial matrix side; sequence EVLKTRLTLRRTGQYKGLLDCAKRILEREGPRAFYR. Residues 336 to 355 form a helical membrane-spanning segment; that stretch reads GYLPNVLGIIPYAGIDLAVY. Residues 356-378 are Mitochondrial intermembrane-facing; the sequence is ETLKNRWLQQYSHESANPGILVL. Residues 379-396 form a helical membrane-spanning segment; sequence LGCGTISSTCGQIASYPL. The Mitochondrial matrix segment spans residues 397-435; it reads ALVRTRMQAQASIEGGPQVSMVGLLRHILSQEGVWGLYR. Residues 436–455 traverse the membrane as a helical segment; it reads GIAPNFMKVIPAVSISYVVY. Residues 456-467 lie on the Mitochondrial intermembrane side of the membrane; that stretch reads ENMKQALGVTSR.

It belongs to the mitochondrial carrier (TC 2.A.29) family. Interacts with MCU. Interacts with MICU1.

It is found in the mitochondrion inner membrane. The enzyme catalyses Mg(2+)(out) + phosphate(in) + ATP(out) = Mg(2+)(in) + phosphate(out) + ATP(in). The catalysed reaction is ADP(out) + phosphate(in) + H(+)(out) = ADP(in) + phosphate(out) + H(+)(in). It catalyses the reaction AMP(out) + phosphate(in) = AMP(in) + phosphate(out). It carries out the reaction phosphate(in) + ATP(out) + 2 H(+)(out) = phosphate(out) + ATP(in) + 2 H(+)(in). The enzyme catalyses dADP(in) + ADP(out) = dADP(out) + ADP(in). The catalysed reaction is Mg(2+)(in) + ADP(out) + ATP(in) + H(+)(out) = Mg(2+)(out) + ADP(in) + ATP(out) + H(+)(in). It catalyses the reaction ADP(out) + diphosphate(in) = ADP(in) + diphosphate(out). It carries out the reaction dAMP(in) + ADP(out) + H(+)(out) = dAMP(out) + ADP(in) + H(+)(in). The enzyme catalyses 3'-AMP(in) + ADP(out) + H(+)(out) = 3'-AMP(out) + ADP(in) + H(+)(in). The catalysed reaction is dAMP(out) + phosphate(in) = dAMP(in) + phosphate(out). It catalyses the reaction 3'-AMP(out) + phosphate(in) = 3'-AMP(in) + phosphate(out). It carries out the reaction dADP(out) + phosphate(in) + H(+)(out) = dADP(in) + phosphate(out) + H(+)(in). Its activity is regulated as follows. Activated by an increase in cytosolic calcium levels that induce a conformational change of the N-terminal regulatory domain, uncapping the channel and allowing transport. Electroneutral antiporter that mediates the transport of adenine nucleotides through the inner mitochondrial membrane. Originally identified as an ATP-magnesium/inorganic phosphate antiporter, it also acts as a broad specificity adenyl nucleotide antiporter. By regulating the mitochondrial matrix adenine nucleotide pool could adapt to changing cellular energetic demands and indirectly regulate adenine nucleotide-dependent metabolic pathways. Also acts as a regulator of mitochondrial calcium uptake and can probably transport trace amounts of other divalent metal cations in complex with ATP. In vitro, a low activity is also observed with guanyl and pyrimidine nucleotides. The sequence is that of Mitochondrial adenyl nucleotide antiporter SLC25A23 from Mus musculus (Mouse).